The following is a 129-amino-acid chain: uncharacterized protein (129 aa).

This is an uncharacterized protein from Saccharomyces cerevisiae (strain ATCC 204508 / S288c) (Baker's yeast).